The chain runs to 288 residues: ATP synthase gamma chain (288 aa).

Belongs to the ATPase gamma chain family. As to quaternary structure, F-type ATPases have 2 components, CF(1) - the catalytic core - and CF(0) - the membrane proton channel. CF(1) has five subunits: alpha(3), beta(3), gamma(1), delta(1), epsilon(1). CF(0) has three main subunits: a, b and c.

The protein resides in the cell inner membrane. Produces ATP from ADP in the presence of a proton gradient across the membrane. The gamma chain is believed to be important in regulating ATPase activity and the flow of protons through the CF(0) complex. This Rickettsia prowazekii (strain Madrid E) protein is ATP synthase gamma chain.